Consider the following 47-residue polypeptide: NADH dehydrogenase [ubiquinone] iron-sulfur protein 2 (47 aa).

It belongs to the complex I 49 kDa subunit family. In terms of assembly, complex I is composed of about 45 different subunits. This is a component of the iron-sulfur (IP) fragment of the enzyme.

The protein localises to the mitochondrion inner membrane. It carries out the reaction a ubiquinone + NADH + 5 H(+)(in) = a ubiquinol + NAD(+) + 4 H(+)(out). In terms of biological role, core subunit of the mitochondrial membrane respiratory chain NADH dehydrogenase (Complex I) that is believed to belong to the minimal assembly required for catalysis. Complex I functions in the transfer of electrons from NADH to the respiratory chain. The immediate electron acceptor for the enzyme is believed to be ubiquinone. Component of the iron-sulfur (IP) fragment of the enzyme. The sequence is that of NADH dehydrogenase [ubiquinone] iron-sulfur protein 2 (NAD7) from Solanum tuberosum (Potato).